A 154-amino-acid chain; its full sequence is MHPAHLLVPLGVCVSLLGAARIPPLPLSLVEFRILIKCANHNSRNVLDYADYGCYCGKGGSGTPVDELDRCCQAHDYCYDDAEKLPACNYRFSGPYWNPYSYKCNEGEVTCTDDNDECKAFICNCDRTAAICFAGAPYNDENFMITIKKKNICQ.

The first 19 residues, 1–19, serve as a signal peptide directing secretion; that stretch reads MHPAHLLVPLGVCVSLLGA. A propeptide spanning residues 20–27 is cleaved from the precursor; it reads ARIPPLPL. 7 disulfides stabilise this stretch: C38-C104, C54-C153, C56-C72, C71-C132, C78-C125, C88-C118, and C111-C123. Positions 55, 57, and 59 each coordinate Ca(2+). Residue H75 is part of the active site. D76 provides a ligand contact to Ca(2+). D126 is an active-site residue.

The protein belongs to the phospholipase A2 family. Group I subfamily. D49 sub-subfamily. Monomer. Ca(2+) serves as cofactor. As to expression, expressed by the venom gland.

It localises to the secreted. It carries out the reaction a 1,2-diacyl-sn-glycero-3-phosphocholine + H2O = a 1-acyl-sn-glycero-3-phosphocholine + a fatty acid + H(+). In terms of biological role, snake venom phospholipase A2 (PLA2) that shows moderate enzymatic activity and exhibits procoagulant activity. PLA2 catalyzes the calcium-dependent hydrolysis of the 2-acyl groups in 3-sn-phosphoglycerides. The chain is Acidic phospholipase A2 2 from Pseudonaja textilis (Eastern brown snake).